We begin with the raw amino-acid sequence, 193 residues long: Partner of Y14 and mago (193 aa).

2 disordered regions span residues 1–27 (MSTP…DGTW) and 118–142 (IQEP…TKRL). Residues 122–137 (TLPSQSVPTESISQSD) show a composition bias toward polar residues. A coiled-coil region spans residues 139 to 192 (TKRLKNLRKKLREIEFLEEKIKAGLLKSPDKDQKEKMSKKNEILNEIDILKNSI).

It belongs to the pym family. As to quaternary structure, interacts (via N-terminus) with mago and tsu/Y14; the interaction is direct.

It localises to the cytoplasm. The protein localises to the nucleus. Its function is as follows. Regulator of the exon junction complex (EJC), a multiprotein complex that associates immediately upstream of the exon-exon junction on mRNAs and serves as a positional landmarks for the intron exon structure of genes and directs post-transcriptional processes in the cytoplasm such as mRNA export, nonsense-mediated mRNA decay (NMD) or translation. This is Partner of Y14 and mago from Bombyx mori (Silk moth).